The primary structure comprises 126 residues: Holo-[acyl-carrier-protein] synthase (126 aa).

Asp8 and Glu57 together coordinate Mg(2+).

It belongs to the P-Pant transferase superfamily. AcpS family. Requires Mg(2+) as cofactor.

Its subcellular location is the cytoplasm. The enzyme catalyses apo-[ACP] + CoA = holo-[ACP] + adenosine 3',5'-bisphosphate + H(+). Transfers the 4'-phosphopantetheine moiety from coenzyme A to a Ser of acyl-carrier-protein. This Geobacter metallireducens (strain ATCC 53774 / DSM 7210 / GS-15) protein is Holo-[acyl-carrier-protein] synthase.